Here is a 331-residue protein sequence, read N- to C-terminus: CMRF35-like molecule 9 (331 aa).

The N-terminal stretch at 1-18 is a signal peptide; that stretch reads MRPLVLLWGCLVLPGYEA. The region spanning 19-120 is the Ig-like V-type domain; the sequence is LKGPKEISGF…LGRDESFEVT (102 aa). At 19-204 the chain is on the extracellular side; the sequence is LKGPKEISGF…KPSVSIPMVR (186 aa). C37 and C106 are oxidised to a cystine. O-linked (GalNAc...) threonine glycosylation is present at T136. Residue S140 is glycosylated (O-linked (GalNAc...) serine). O-linked (GalNAc...) threonine glycosylation occurs at T143. S145 carries O-linked (GalNAc...) serine glycosylation. O-linked (GalNAc...) threonine glycosylation is found at T150 and T152. O-linked (GalNAc...) serine glycosylation occurs at S154. O-linked (GalNAc...) threonine glycans are attached at residues T164, T181, and T182. An O-linked (GalNAc...) serine glycan is attached at S186. The helical transmembrane segment at 205–225 threads the bilayer; that stretch reads MMAPVLILLSLLLAAGLIAFG. Over 226 to 331 the chain is Cytoplasmic; sequence SHMLRWRKKA…ELAFSEFISV (106 aa). The segment covering 278–293 has biased composition (polar residues); it reads NPSAVPSPETQNLSQS. The disordered stretch occupies residues 278 to 318; sequence NPSAVPSPETQNLSQSTEEEEAARSLDDDKEDVMAPPPLQM.

This sequence belongs to the CD300 family. In terms of processing, O-glycosylated with sialylated oligosaccharides. Expressed in monocyte cell lines. Expressed in certain types of endothelial and myeloid lineage cells. Expressed in mesenteric lymph nodes (LNs), spleen, thymus, lung, heart and kidney. Expressed in high endothelial venules (HEVs) in peripheral and mesenteric LNs (at protein level). Highly expressed in heart. Slightly expressed in spleen and thymus. Isoform 5 is expressed preferentially in heart. Isoform 1 is expressed predominantly in kidney and liver.

It localises to the apical cell membrane. Its subcellular location is the basolateral cell membrane. The protein resides in the endosome. It is found in the multivesicular body membrane. Functionally, receptor which may mediate L-selectin-dependent lymphocyte rollings. Binds SELL in a calcium dependent manner. Binds lymphocyte. This is CMRF35-like molecule 9 (Cd300lg) from Mus musculus (Mouse).